A 242-amino-acid polypeptide reads, in one-letter code: Ditrans,polycis-undecaprenyl-diphosphate synthase ((2E,6E)-farnesyl-diphosphate specific) (242 aa).

Residue Asp21 is part of the active site. Position 21 (Asp21) interacts with Mg(2+). Residues 22 to 25 (GNGR), Trp26, Arg34, His38, and 66 to 68 (SSE) contribute to the substrate site. Asn69 (proton acceptor) is an active-site residue. Substrate contacts are provided by residues Trp70, Arg72, Arg189, and 195 to 197 (RIS). Residue Glu208 participates in Mg(2+) binding.

Belongs to the UPP synthase family. As to quaternary structure, homodimer. Requires Mg(2+) as cofactor.

It catalyses the reaction 8 isopentenyl diphosphate + (2E,6E)-farnesyl diphosphate = di-trans,octa-cis-undecaprenyl diphosphate + 8 diphosphate. Functionally, catalyzes the sequential condensation of isopentenyl diphosphate (IPP) with (2E,6E)-farnesyl diphosphate (E,E-FPP) to yield (2Z,6Z,10Z,14Z,18Z,22Z,26Z,30Z,34E,38E)-undecaprenyl diphosphate (di-trans,octa-cis-UPP). UPP is the precursor of glycosyl carrier lipid in the biosynthesis of bacterial cell wall polysaccharide components such as peptidoglycan and lipopolysaccharide. This Haemophilus ducreyi (strain 35000HP / ATCC 700724) protein is Ditrans,polycis-undecaprenyl-diphosphate synthase ((2E,6E)-farnesyl-diphosphate specific).